Here is a 490-residue protein sequence, read N- to C-terminus: GTPase Der (490 aa).

Residues 1 to 165 (MRIAILGRPN…RIRQVAEIPL (165 aa)) enclose the EngA-type G 1 domain. GTP is bound by residues 7–14 (GRPNVGKS), 54–58 (DTGGV), and 117–120 (NKAD). The segment at 165 to 184 (LPSAEEQENTQEEEFSSKES) is disordered. The span at 169 to 178 (EEQENTQEEE) shows a compositional bias: acidic residues. Residues 227-400 (LKVALIGHPN…AVDDVYTIAT (174 aa)) enclose the EngA-type G 2 domain. GTP is bound by residues 233-240 (GHPNVGKS), 280-284 (DTAGL), and 345-348 (NKWD). Residues 401–485 (TKLSTSLVNK…PFDLEYKAKP (85 aa)) enclose the KH-like domain.

Belongs to the TRAFAC class TrmE-Era-EngA-EngB-Septin-like GTPase superfamily. EngA (Der) GTPase family. As to quaternary structure, associates with the 50S ribosomal subunit.

Its function is as follows. GTPase that plays an essential role in the late steps of ribosome biogenesis. The chain is GTPase Der from Chlamydia muridarum (strain MoPn / Nigg).